The primary structure comprises 427 residues: Endothelin-1 receptor (427 aa).

An N-terminal signal peptide occupies residues 1 to 20 (MSIFCLAAYFWLTMVGGVMA). The Extracellular portion of the chain corresponds to 21-80 (DNPERYSANLSSHMEDFTPFPGTEINFLGTTHRPPNLALPSNGSMHGYCPQQTKITTAFK). N-linked (GlcNAc...) asparagine glycosylation is found at N29 and N62. Residues 81 to 102 (YINTVISCTIFIVGMVGNATLL) traverse the membrane as a helical segment. Over 103–112 (RIIYQNKCMR) the chain is Cytoplasmic. Residues 113–132 (NGPNALIASLALGDLIYVVI) form a helical membrane-spanning segment. Residues 133–159 (DLPINVFKLLAGRWPFDHNDFGVFLCK) are Extracellular-facing. A disulfide bridge connects residues C158 and C239. Residues 160-181 (LFPFLQKSSVGITVLNLCALSV) form a helical membrane-spanning segment. The Cytoplasmic portion of the chain corresponds to 182 to 205 (DRYRAVASWSRVQGIGIPLITAIE). A helical transmembrane segment spans residues 206–229 (IVSIWILSFILAIPEAIGFVMVPF). The Extracellular portion of the chain corresponds to 230 to 256 (EYKGELHRTCMLNATSKFMEFYQDVKD). N242 is a glycosylation site (N-linked (GlcNAc...) asparagine). The chain crosses the membrane as a helical span at residues 257-278 (WWLFGFYFCMPLVCTAIFYTLM). Over 279–306 (TCEMLNRRNGSLRIALSEHLKQRREVAK) the chain is Cytoplasmic. Residues 307 to 328 (TVFCLVVIFALCWFPLHLSRIL) form a helical membrane-spanning segment. Topologically, residues 329 to 347 (KKTVYDEMDKNRCELLSFL) are extracellular. The helical transmembrane segment at 348 to 372 (LLMDYIGINLATMNSCINPIALYFV) threads the bilayer. Over 373–427 (SKKFKNCFQSCLCCCCHQSKSLMTSVPMNGTSIQWKNQEQNNHNTERSSHKDSMN) the chain is Cytoplasmic. The tract at residues 408–427 (KNQEQNNHNTERSSHKDSMN) is disordered. A compositionally biased stretch (basic and acidic residues) spans 416–427 (NTERSSHKDSMN). The residue at position 425 (S425) is a Phosphoserine.

This sequence belongs to the G-protein coupled receptor 1 family. Endothelin receptor subfamily. EDNRA sub-subfamily. As to quaternary structure, interacts with HDAC7 and KAT5.

Its subcellular location is the cell membrane. Receptor for endothelin-1. Mediates its action by association with G proteins that activate a phosphatidylinositol-calcium second messenger system. The rank order of binding affinities for ET-A is: ET1 &gt; ET2 &gt;&gt; ET3. This chain is Endothelin-1 receptor, found in Mus musculus (Mouse).